Reading from the N-terminus, the 116-residue chain is Large ribosomal subunit protein bL19 (116 aa).

It belongs to the bacterial ribosomal protein bL19 family.

This protein is located at the 30S-50S ribosomal subunit interface and may play a role in the structure and function of the aminoacyl-tRNA binding site. The polypeptide is Large ribosomal subunit protein bL19 (Staphylococcus aureus (strain USA300)).